The chain runs to 696 residues: Rho-related BTB domain-containing protein 1 (696 aa).

Residues 1-210 (MDADMDYERP…DNAIRAALIS (210 aa)) are rho-like. GTP-binding positions include 21-28 (GDNAVGKT), 84-88 (DTFGD), and 140-143 (CQLD). 2 BTB domains span residues 266–427 (ADVL…DEKE) and 485–552 (SDVT…SPNL). A disordered region spans residues 327 to 348 (VDPEEEREEGPPRIPQADQWKS).

It belongs to the small GTPase superfamily. Rho family. Ubiquitous, with highest levels in skeletal muscle, placenta, testis, stomach, and kidney, followed by uterus and adrenal gland. Expressed in a variety of fetal tissues.

This chain is Rho-related BTB domain-containing protein 1 (RHOBTB1), found in Homo sapiens (Human).